Here is a 327-residue protein sequence, read N- to C-terminus: Zinc transport protein ZntB (327 aa).

The Cytoplasmic segment spans residues 1–273 (MEAIKGSEVN…SRRSYTMSLM (273 aa)). The chain crosses the membrane as a helical span at residues 274–294 (AMVFLPSTFLTGLFGVNLGGI). Residues 295–300 (PGGGWH) lie on the Periplasmic side of the membrane. A helical membrane pass occupies residues 301 to 321 (LGFSVFCVALVLLIGGVTWWL). The Cytoplasmic segment spans residues 322–327 (HRSKWL).

Belongs to the CorA metal ion transporter (MIT) (TC 1.A.35) family.

It localises to the cell inner membrane. The catalysed reaction is Zn(2+)(out) + H(+)(out) = Zn(2+)(in) + H(+)(in). In terms of biological role, zinc transporter. Acts as a Zn(2+):proton symporter, which likely mediates zinc ion uptake. In Cronobacter sakazakii (strain ATCC BAA-894) (Enterobacter sakazakii), this protein is Zinc transport protein ZntB.